Consider the following 204-residue polypeptide: Holliday junction branch migration complex subunit RuvA (204 aa).

The interval 1–64 (MIAQIRGKLI…QDSILLVGFC (64 aa)) is domain I. The interval 65–143 (TENEKQLFKL…GWTSKEQITF (79 aa)) is domain II. A flexible linker region spans residues 144-154 (INNKKDAIDQS). Residues 154 to 204 (SVMEEDAISALINLGYKSQAAKDAIDRVISEGGENKSLDVILKKALKVLAM) form a domain III region.

This sequence belongs to the RuvA family. Homotetramer. Forms an RuvA(8)-RuvB(12)-Holliday junction (HJ) complex. HJ DNA is sandwiched between 2 RuvA tetramers; dsDNA enters through RuvA and exits via RuvB. An RuvB hexamer assembles on each DNA strand where it exits the tetramer. Each RuvB hexamer is contacted by two RuvA subunits (via domain III) on 2 adjacent RuvB subunits; this complex drives branch migration. In the full resolvosome a probable DNA-RuvA(4)-RuvB(12)-RuvC(2) complex forms which resolves the HJ.

It is found in the cytoplasm. Functionally, the RuvA-RuvB-RuvC complex processes Holliday junction (HJ) DNA during genetic recombination and DNA repair, while the RuvA-RuvB complex plays an important role in the rescue of blocked DNA replication forks via replication fork reversal (RFR). RuvA specifically binds to HJ cruciform DNA, conferring on it an open structure. The RuvB hexamer acts as an ATP-dependent pump, pulling dsDNA into and through the RuvAB complex. HJ branch migration allows RuvC to scan DNA until it finds its consensus sequence, where it cleaves and resolves the cruciform DNA. The polypeptide is Holliday junction branch migration complex subunit RuvA (Syntrophus aciditrophicus (strain SB)).